The chain runs to 339 residues: MRVYYDRDADINLIKGKKVVIVGYGSQGHAHALNLRDSGVKDIVIALRKGSASAKKAEAEGFKVMEVADAAAQADVVMMLTPDELQGDIYRESLHNQMKQGAALLFAHGLNVHFNLIEPRKDLDVLMVAPKGPGHTVRSEYLRGGGVPTLIAIAQDASGNAHDLGLSYASANGGGRAGIIETTFKEECETDLFGEQVVLCGGLVELIKAGFETLVEAGYAPEMAYFECLHEVKLIVDLIYEGGIANMNYSISNTAEYGEYVTGPRIITPETKAEMKRVLTDIQSGTFTRNWMLENKVNQTSFKATRARNAAHPIEEVGERLRAMMPWIKEKALVDKTKN.

The 182-residue stretch at Met-1–Thr-182 folds into the KARI N-terminal Rossmann domain. NADP(+) is bound by residues Tyr-24–Gln-27, Arg-48, Ser-51, Ser-53, and Asp-83–Gln-86. Residue His-108 is part of the active site. Residue Gly-134 coordinates NADP(+). The 146-residue stretch at Thr-183 to Ile-328 folds into the KARI C-terminal knotted domain. 4 residues coordinate Mg(2+): Asp-191, Glu-195, Glu-227, and Glu-231. Ser-252 lines the substrate pocket.

Belongs to the ketol-acid reductoisomerase family. It depends on Mg(2+) as a cofactor.

The enzyme catalyses (2R)-2,3-dihydroxy-3-methylbutanoate + NADP(+) = (2S)-2-acetolactate + NADPH + H(+). It carries out the reaction (2R,3R)-2,3-dihydroxy-3-methylpentanoate + NADP(+) = (S)-2-ethyl-2-hydroxy-3-oxobutanoate + NADPH + H(+). It functions in the pathway amino-acid biosynthesis; L-isoleucine biosynthesis; L-isoleucine from 2-oxobutanoate: step 2/4. Its pathway is amino-acid biosynthesis; L-valine biosynthesis; L-valine from pyruvate: step 2/4. Involved in the biosynthesis of branched-chain amino acids (BCAA). Catalyzes an alkyl-migration followed by a ketol-acid reduction of (S)-2-acetolactate (S2AL) to yield (R)-2,3-dihydroxy-isovalerate. In the isomerase reaction, S2AL is rearranged via a Mg-dependent methyl migration to produce 3-hydroxy-3-methyl-2-ketobutyrate (HMKB). In the reductase reaction, this 2-ketoacid undergoes a metal-dependent reduction by NADPH to yield (R)-2,3-dihydroxy-isovalerate. This chain is Ketol-acid reductoisomerase (NADP(+)), found in Methylobacterium nodulans (strain LMG 21967 / CNCM I-2342 / ORS 2060).